A 206-amino-acid polypeptide reads, in one-letter code: Outer-membrane lipoprotein carrier protein (206 aa).

A signal peptide spans 1–21; that stretch reads MKKLLCAVLLSPLLYSNAVLA.

Belongs to the LolA family. As to quaternary structure, monomer.

The protein resides in the periplasm. Functionally, participates in the translocation of lipoproteins from the inner membrane to the outer membrane. Only forms a complex with a lipoprotein if the residue after the N-terminal Cys is not an aspartate (The Asp acts as a targeting signal to indicate that the lipoprotein should stay in the inner membrane). This is Outer-membrane lipoprotein carrier protein from Shewanella sp. (strain MR-4).